A 58-amino-acid polypeptide reads, in one-letter code: Small ribosomal subunit protein bS21 (58 aa).

The interval Arg35–Lys58 is disordered. Residues Val43–Lys58 show a composition bias toward basic residues.

Belongs to the bacterial ribosomal protein bS21 family.

This is Small ribosomal subunit protein bS21 from Acetivibrio thermocellus (strain ATCC 27405 / DSM 1237 / JCM 9322 / NBRC 103400 / NCIMB 10682 / NRRL B-4536 / VPI 7372) (Clostridium thermocellum).